Reading from the N-terminus, the 446-residue chain is WEB family protein At3g56270 (446 aa).

Residues 313–349 are a coiled coil; sequence TNVSRIEILRKLEEANEEVKQSKQALEVALNRVEIAS.

This sequence belongs to the WEB family.

The sequence is that of WEB family protein At3g56270 from Arabidopsis thaliana (Mouse-ear cress).